An 84-amino-acid polypeptide reads, in one-letter code: ATP synthase subunit c (84 aa).

2 helical membrane-spanning segments follow: residues 9–29 (IFGSVILLAVAALATAIGFSL) and 54–74 (IVAGLLDAISMIAVGIALLFI).

This sequence belongs to the ATPase C chain family. F-type ATPases have 2 components, F(1) - the catalytic core - and F(0) - the membrane proton channel. F(1) has five subunits: alpha(3), beta(3), gamma(1), delta(1), epsilon(1). F(0) has three main subunits: a(1), b(2) and c(10-14). The alpha and beta chains form an alternating ring which encloses part of the gamma chain. F(1) is attached to F(0) by a central stalk formed by the gamma and epsilon chains, while a peripheral stalk is formed by the delta and b chains.

It is found in the cell inner membrane. Its function is as follows. F(1)F(0) ATP synthase produces ATP from ADP in the presence of a proton or sodium gradient. F-type ATPases consist of two structural domains, F(1) containing the extramembraneous catalytic core and F(0) containing the membrane proton channel, linked together by a central stalk and a peripheral stalk. During catalysis, ATP synthesis in the catalytic domain of F(1) is coupled via a rotary mechanism of the central stalk subunits to proton translocation. Functionally, key component of the F(0) channel; it plays a direct role in translocation across the membrane. A homomeric c-ring of between 10-14 subunits forms the central stalk rotor element with the F(1) delta and epsilon subunits. This chain is ATP synthase subunit c, found in Histophilus somni (strain 129Pt) (Haemophilus somnus).